The sequence spans 137 residues: Small ribosomal subunit protein uS9 (137 aa).

The disordered stretch occupies residues 118–137; sequence KERKKYGLRKARKAPQYSKR.

The protein belongs to the universal ribosomal protein uS9 family.

The sequence is that of Small ribosomal subunit protein uS9 from Acaryochloris marina (strain MBIC 11017).